The primary structure comprises 217 residues: Adenylate kinase (217 aa).

Gly10–Thr15 contacts ATP. The interval Ser30–Val59 is NMP. Residues Thr31, Arg36, Gln57–Val59, Gly85–Arg88, and Gln92 each bind AMP. Positions Gly126–Asp163 are LID. Arg127 serves as a coordination point for ATP. Cys130 and Cys133 together coordinate Zn(2+). Ser136–Tyr137 contributes to the ATP binding site. The Zn(2+) site is built by Cys150 and Cys153. Positions 160 and 171 each coordinate AMP. Gly199 is a binding site for ATP.

It belongs to the adenylate kinase family. Monomer.

The protein resides in the cytoplasm. The catalysed reaction is AMP + ATP = 2 ADP. It functions in the pathway purine metabolism; AMP biosynthesis via salvage pathway; AMP from ADP: step 1/1. Catalyzes the reversible transfer of the terminal phosphate group between ATP and AMP. Plays an important role in cellular energy homeostasis and in adenine nucleotide metabolism. This chain is Adenylate kinase, found in Clostridium kluyveri (strain NBRC 12016).